Here is a 157-residue protein sequence, read N- to C-terminus: Transcriptional repressor NrdR (157 aa).

The segment at 1–21 is disordered; the sequence is MKCPHCGNNGSRVVDSRPTDE. A zinc finger lies at 3 to 34; it reads CPHCGNNGSRVVDSRPTDEGRVIRRRRECEKC. The ATP-cone domain occupies 49–139; the sequence is LLVIKKNGSR…VYRQFKDMHV (91 aa).

This sequence belongs to the NrdR family. Zn(2+) serves as cofactor.

Functionally, negatively regulates transcription of bacterial ribonucleotide reductase nrd genes and operons by binding to NrdR-boxes. The polypeptide is Transcriptional repressor NrdR (Pediococcus pentosaceus (strain ATCC 25745 / CCUG 21536 / LMG 10740 / 183-1w)).